The sequence spans 1755 residues: E3 ubiquitin-protein ligase UBR2 (1755 aa).

Alanine 2 bears the N-acetylalanine mark. A Glycyl lysine isopeptide (Lys-Gly) (interchain with G-Cter in ubiquitin) cross-link involves residue lysine 94. The UBR-type zinc-finger motif lies at 97 to 168; that stretch reads HLCGRVFKVG…EGPYCQKHEL (72 aa). Zn(2+) contacts are provided by cysteine 99, cysteine 112, cysteine 115, cysteine 124, cysteine 127, histidine 133, and histidine 136. A peptide is bound at residue phenylalanine 148. Zn(2+) is bound at residue cysteine 149. Aspartate 150 provides a ligand contact to a peptide. A Zn(2+)-binding site is contributed by cysteine 151. An a peptide-binding site is contributed by aspartate 153. Residue lysine 158 forms a Glycyl lysine isopeptide (Lys-Gly) (interchain with G-Cter in ubiquitin) linkage. Cysteine 163 serves as a coordination point for Zn(2+). Lysine 165 is covalently cross-linked (Glycyl lysine isopeptide (Lys-Gly) (interchain with G-Cter in ubiquitin)). Position 166 (histidine 166) interacts with Zn(2+). Residues lysine 248, lysine 255, and lysine 470 each participate in a glycyl lysine isopeptide (Lys-Gly) (interchain with G-Cter in ubiquitin) cross-link. Serine 476 carries the post-translational modification Phosphoserine. Residues lysine 488, lysine 568, lysine 779, and lysine 789 each participate in a glycyl lysine isopeptide (Lys-Gly) (interchain with G-Cter in ubiquitin) cross-link. A disordered region spans residues 1004–1034; the sequence is ESSPTSPVAETEGTIMEESSRDKDKAERKRK. Positions 1019 to 1054 form a coiled coil; sequence MEESSRDKDKAERKRKAEIARLRREKIMAQMSEMQR. A compositionally biased stretch (basic and acidic residues) spans 1021 to 1034; that stretch reads ESSRDKDKAERKRK. Residues cysteine 1108, cysteine 1111, cysteine 1168, histidine 1170, histidine 1173, cysteine 1176, cysteine 1210, and cysteine 1213 each contribute to the Zn(2+) site. An RING-type; atypical zinc finger spans residues 1108 to 1214; sequence CILCQEEQEV…NGEFLCPLCE (107 aa). Positions 1261 to 1287 are disordered; sequence RKEESTPNNASTKNSENVDELQLPEGF. A compositionally biased stretch (polar residues) spans 1266–1275; sequence TPNNASTKNS. Residues lysine 1496, lysine 1599, and lysine 1689 each participate in a glycyl lysine isopeptide (Lys-Gly) (interchain with G-Cter in ubiquitin) cross-link. Serine 1694 carries the phosphoserine modification. Tyrosine 1697 is modified (phosphotyrosine).

This sequence belongs to the E3 ubiquitin-protein ligase UBR1-like family. As to quaternary structure, interacts with UBE2B; promotes the UBE2B-H2A interaction and the ubiquitination of histone H2A by UBE2B and UBR2. Interacts with RECQL4. Interacts with TEX19; does not lead to TEX19 degradation and stabilizes it. Interacts with CASP8. Interacts with ATXN3. Interacts with UBE2O. Dephosphorylated by DUSP22 at Ser-1694 and Tyr-1697, leading to subsequent ubiquitination and proteasomal degradation. In terms of processing, 'Lys-48'-linked ubiquitinated at Lys-94, Lys-779 and Lys-1599 following DUSP22-mediated dephosphorylation of Ser-1694 and Tyr-1697 which promotes UBR2 interaction with the SCF(FBW1A) E3 ubiquitin-protein ligase complex. In terms of tissue distribution, broadly expressed, with highest levels in skeletal muscle, kidney and pancreas. Present in acinar cells of the pancreas (at protein level).

It localises to the nucleus. It is found in the chromosome. The catalysed reaction is S-ubiquitinyl-[E2 ubiquitin-conjugating enzyme]-L-cysteine + [acceptor protein]-L-lysine = [E2 ubiquitin-conjugating enzyme]-L-cysteine + N(6)-ubiquitinyl-[acceptor protein]-L-lysine.. The protein operates within protein modification; protein ubiquitination. E3 ubiquitin-protein ligase which is a component of the N-end rule pathway. Recognizes and binds to proteins bearing specific N-terminal residues (N-degrons) that are destabilizing according to the N-end rule, leading to their ubiquitination and subsequent degradation. Recognizes both type-1 and type-2 N-degrons, containing positively charged amino acids (Arg, Lys and His) and bulky and hydrophobic amino acids, respectively. Does not ubiquitinate proteins that are acetylated at the N-terminus. In contrast, it strongly binds methylated N-degrons. Plays a critical role in chromatin inactivation and chromosome-wide transcriptional silencing during meiosis via ubiquitination of histone H2A. Binds leucine and is a negative regulator of the leucine-mTOR signaling pathway, thereby controlling cell growth. Required for spermatogenesis, promotes, with Tex19.1, SPO11-dependent recombination foci to accumulate and drive robust homologous chromosome synapsis. Polyubiquitinates LINE-1 retrotransposon encoded, LIRE1, which induces degradation, inhibiting LINE-1 retrotransposon mobilization. Catalyzes ubiquitination and degradation of the N-terminal part of NLRP1 following NLRP1 activation by pathogens and other damage-associated signals: ubiquitination promotes degradation of the N-terminal part and subsequent release of the cleaved C-terminal part of NLRP1, which polymerizes and forms the NLRP1 inflammasome followed by host cell pyroptosis. Plays a role in T-cell receptor signaling by inducing 'Lys-63'-linked ubiquitination of lymphocyte cell-specific kinase LCK. This activity is regulated by DUSP22, which induces 'Lys-48'-linked ubiquitination of UBR2, leading to its proteasomal degradation by SCF E3 ubiquitin-protein ligase complex. This chain is E3 ubiquitin-protein ligase UBR2 (UBR2), found in Homo sapiens (Human).